We begin with the raw amino-acid sequence, 457 residues long: UDP-glucosyltransferase 45 (457 aa).

Residue His-21 is the Proton acceptor of the active site. Residue His-21 coordinates an anthocyanidin. Residue Asp-112 is the Charge relay of the active site. Residues Thr-134, Gln-336, His-351, Trp-354, Asn-355, Ser-356, Glu-359, Asp-375, and Gln-376 each contribute to the UDP-alpha-D-glucose site.

Belongs to the UDP-glycosyltransferase family.

It carries out the reaction (20S)-protopanaxadiol + UDP-alpha-D-glucose = (20S)-ginsenoside Rh2 + UDP + H(+). It functions in the pathway secondary metabolite biosynthesis; terpenoid biosynthesis. In terms of biological role, component of the triterpene saponins (e.g. PPD-type ginsenosides) biosynthetic pathway. Glycosyltransferase that catalyzes the biosynthesis of ginsenoside Rh2 from protopanaxadiol (PPD). This is UDP-glucosyltransferase 45 from Panax ginseng (Korean ginseng).